The primary structure comprises 271 residues: Sedoheptulose 1,7-bisphosphatase (271 aa).

Residue R12 coordinates substrate. H13 serves as the catalytic Tele-phosphohistidine intermediate. Substrate-binding positions include 24 to 25 (YT), R69, 99 to 102 (EWEY), R181, and H244. Catalysis depends on E99, which acts as the Proton donor/acceptor.

This sequence belongs to the phosphoglycerate mutase family. SHB17 subfamily. Homodimer.

It is found in the cytoplasm. The protein localises to the nucleus. It catalyses the reaction D-sedoheptulose 1,7-bisphosphate + H2O = D-sedoheptulose 7-phosphate + phosphate. Sedoheptulose 1,7-bisphosphatase involved in riboneogenesis. Dephosphorylates sedoheptulose 1,7-bisphosphate (SBP), which is converted via the non-oxidative pentose phosphate pathway to ribose-5-phosphate. Has a fructose 1,6-bisphosphatase activity in vitro, but this is probably not biologically relevant, since deletion does not affect fructose 1,6-biphosphate (FBP) levels. The sequence is that of Sedoheptulose 1,7-bisphosphatase (SHB17) from Saccharomyces cerevisiae (strain ATCC 204508 / S288c) (Baker's yeast).